We begin with the raw amino-acid sequence, 205 residues long: Leucyl/phenylalanyl-tRNA--protein transferase (205 aa).

The protein belongs to the L/F-transferase family.

The protein localises to the cytoplasm. The enzyme catalyses N-terminal L-lysyl-[protein] + L-leucyl-tRNA(Leu) = N-terminal L-leucyl-L-lysyl-[protein] + tRNA(Leu) + H(+). The catalysed reaction is N-terminal L-arginyl-[protein] + L-leucyl-tRNA(Leu) = N-terminal L-leucyl-L-arginyl-[protein] + tRNA(Leu) + H(+). It carries out the reaction L-phenylalanyl-tRNA(Phe) + an N-terminal L-alpha-aminoacyl-[protein] = an N-terminal L-phenylalanyl-L-alpha-aminoacyl-[protein] + tRNA(Phe). Functions in the N-end rule pathway of protein degradation where it conjugates Leu, Phe and, less efficiently, Met from aminoacyl-tRNAs to the N-termini of proteins containing an N-terminal arginine or lysine. In Mesorhizobium japonicum (strain LMG 29417 / CECT 9101 / MAFF 303099) (Mesorhizobium loti (strain MAFF 303099)), this protein is Leucyl/phenylalanyl-tRNA--protein transferase.